Consider the following 287-residue polypeptide: tRNA uridine(34) hydroxylase (287 aa).

The Rhodanese domain occupies 132–226 (EGRPVVMLDT…YFEEVGGAHY (95 aa)). C186 serves as the catalytic Cysteine persulfide intermediate.

Belongs to the TrhO family.

It carries out the reaction uridine(34) in tRNA + AH2 + O2 = 5-hydroxyuridine(34) in tRNA + A + H2O. In terms of biological role, catalyzes oxygen-dependent 5-hydroxyuridine (ho5U) modification at position 34 in tRNAs. This is tRNA uridine(34) hydroxylase from Paraburkholderia xenovorans (strain LB400).